A 182-amino-acid chain; its full sequence is Adenylate kinase (182 aa).

12–17 (GAGKGT) is a binding site for ATP. Positions 32–61 (STGDLLRDEVSSGSVLGIKAAEIMNKGELV) are NMP. AMP is bound by residues Thr-33, Arg-38, 59-61 (ELV), 85-88 (GFPR), and Gln-92. The interval 126–132 (ERGRQDD) is LID. Position 127 (Arg-127) interacts with ATP. AMP-binding residues include Arg-129 and Arg-140. Ala-168 contacts ATP.

It belongs to the adenylate kinase family. Monomer.

Its subcellular location is the cytoplasm. It catalyses the reaction AMP + ATP = 2 ADP. Its pathway is purine metabolism; AMP biosynthesis via salvage pathway; AMP from ADP: step 1/1. In terms of biological role, catalyzes the reversible transfer of the terminal phosphate group between ATP and AMP. Plays an important role in cellular energy homeostasis and in adenine nucleotide metabolism. The chain is Adenylate kinase from Prochlorococcus marinus (strain NATL2A).